Here is a 398-residue protein sequence, read N- to C-terminus: Chorismate synthase (398 aa).

NADP(+) contacts are provided by Arg-44 and Arg-50. Residues 133–135 (RAS), 261–262 (QA), Gly-306, 321–325 (KPIPT), and Arg-347 each bind FMN.

This sequence belongs to the chorismate synthase family. Homotetramer. FMNH2 serves as cofactor.

The catalysed reaction is 5-O-(1-carboxyvinyl)-3-phosphoshikimate = chorismate + phosphate. Its pathway is metabolic intermediate biosynthesis; chorismate biosynthesis; chorismate from D-erythrose 4-phosphate and phosphoenolpyruvate: step 7/7. Functionally, catalyzes the anti-1,4-elimination of the C-3 phosphate and the C-6 proR hydrogen from 5-enolpyruvylshikimate-3-phosphate (EPSP) to yield chorismate, which is the branch point compound that serves as the starting substrate for the three terminal pathways of aromatic amino acid biosynthesis. This reaction introduces a second double bond into the aromatic ring system. In Aquifex aeolicus (strain VF5), this protein is Chorismate synthase.